A 493-amino-acid polypeptide reads, in one-letter code: D-aminoacyl-tRNA deacylase (493 aa).

Residues 22-37 (DLGDWERRDDPSRPDA) show a composition bias toward basic and acidic residues. 2 disordered regions span residues 22 to 44 (DLGDWERRDDPSRPDADGGGTYY) and 441 to 493 (PEGP…EPSE).

Belongs to the DtdA deacylase family. Monomer. The cofactor is Zn(2+).

It catalyses the reaction a D-aminoacyl-tRNA + H2O = a tRNA + a D-alpha-amino acid + H(+). The catalysed reaction is glycyl-tRNA(Ala) + H2O = tRNA(Ala) + glycine + H(+). Its function is as follows. D-aminoacyl-tRNA deacylase with broad substrate specificity. By recycling D-aminoacyl-tRNA to D-amino acids and free tRNA molecules, this enzyme counteracts the toxicity associated with the formation of D-aminoacyl-tRNA entities in vivo. The sequence is that of D-aminoacyl-tRNA deacylase from Halorubrum lacusprofundi (strain ATCC 49239 / DSM 5036 / JCM 8891 / ACAM 34).